A 309-amino-acid chain; its full sequence is Pyridoxal 5'-phosphate synthase subunit PDX1.1 (309 aa).

Residue methionine 1 is modified to N-acetylmethionine. Aspartate 41 is a binding site for D-ribose 5-phosphate. Lysine 98 serves as the catalytic Schiff-base intermediate with D-ribose 5-phosphate. Glycine 170 serves as a coordination point for D-ribose 5-phosphate. Residue arginine 182 participates in D-glyceraldehyde 3-phosphate binding. Residues glycine 231 and 252 to 253 contribute to the D-ribose 5-phosphate site; that span reads GS.

Belongs to the PdxS/SNZ family. As to quaternary structure, homodimer or heterodimer with PDX1.2 or PDX1.3. Interacts with PDX2. Expressed in flowers, shoots, leaves and weakly in roots.

Its subcellular location is the cytoplasm. It catalyses the reaction aldehydo-D-ribose 5-phosphate + D-glyceraldehyde 3-phosphate + L-glutamine = pyridoxal 5'-phosphate + L-glutamate + phosphate + 3 H2O + H(+). Its pathway is cofactor biosynthesis; pyridoxal 5'-phosphate biosynthesis. In terms of biological role, catalyzes the formation of pyridoxal 5'-phosphate from ribose 5-phosphate (RBP), glyceraldehyde 3-phosphate (G3P) and ammonia. The ammonia is provided by PDX2. Can also use ribulose 5-phosphate and dihydroxyacetone phosphate as substrates, resulting from enzyme-catalyzed isomerization of RBP and G3P, respectively. Also plays an indirect role in resistance to singlet oxygen-generating photosensitizers. In Arabidopsis thaliana (Mouse-ear cress), this protein is Pyridoxal 5'-phosphate synthase subunit PDX1.1 (PDX11).